Consider the following 264-residue polypeptide: Shikimate dehydrogenase (NADP(+)) (264 aa).

Shikimate is bound by residues 14 to 16 (SVS) and T61. K65 functions as the Proton acceptor in the catalytic mechanism. Positions 85 and 99 each coordinate shikimate. NADP(+)-binding positions include 122–126 (GAGGA), 145–150 (NRTVSR), and A208. Shikimate is bound at residue Y210. An NADP(+)-binding site is contributed by G231.

Belongs to the shikimate dehydrogenase family. As to quaternary structure, homodimer.

The enzyme catalyses shikimate + NADP(+) = 3-dehydroshikimate + NADPH + H(+). The protein operates within metabolic intermediate biosynthesis; chorismate biosynthesis; chorismate from D-erythrose 4-phosphate and phosphoenolpyruvate: step 4/7. Involved in the biosynthesis of the chorismate, which leads to the biosynthesis of aromatic amino acids. Catalyzes the reversible NADPH linked reduction of 3-dehydroshikimate (DHSA) to yield shikimate (SA). This chain is Shikimate dehydrogenase (NADP(+)), found in Natronomonas pharaonis (strain ATCC 35678 / DSM 2160 / CIP 103997 / JCM 8858 / NBRC 14720 / NCIMB 2260 / Gabara) (Halobacterium pharaonis).